We begin with the raw amino-acid sequence, 216 residues long: 3-isopropylmalate dehydratase small subunit (216 aa).

The protein belongs to the LeuD family. LeuD type 1 subfamily. As to quaternary structure, heterodimer of LeuC and LeuD.

The enzyme catalyses (2R,3S)-3-isopropylmalate = (2S)-2-isopropylmalate. The protein operates within amino-acid biosynthesis; L-leucine biosynthesis; L-leucine from 3-methyl-2-oxobutanoate: step 2/4. Functionally, catalyzes the isomerization between 2-isopropylmalate and 3-isopropylmalate, via the formation of 2-isopropylmaleate. The chain is 3-isopropylmalate dehydratase small subunit from Albidiferax ferrireducens (strain ATCC BAA-621 / DSM 15236 / T118) (Rhodoferax ferrireducens).